Here is a 123-residue protein sequence, read N- to C-terminus: Small ribosomal subunit protein uS12c (123 aa).

This sequence belongs to the universal ribosomal protein uS12 family. In terms of assembly, part of the 30S ribosomal subunit.

Its subcellular location is the plastid. The protein resides in the chloroplast. With S4 and S5 plays an important role in translational accuracy. Located at the interface of the 30S and 50S subunits. This Anthoceros angustus (Hornwort) protein is Small ribosomal subunit protein uS12c (rps12).